A 136-amino-acid polypeptide reads, in one-letter code: Putative LysR family substrate binding domain-containing protein YagP (136 aa).

Belongs to the LysR transcriptional regulatory family.

This chain is Putative LysR family substrate binding domain-containing protein YagP (yagP), found in Escherichia coli (strain K12).